The chain runs to 323 residues: tRNA-dihydrouridine(16) synthase (323 aa).

FMN is bound by residues 7–9 and glutamine 68; that span reads PME. The active-site Proton donor is cysteine 98. Residues lysine 139, 200 to 202, and 224 to 225 each bind FMN; these read NGE and CR.

This sequence belongs to the Dus family. DusC subfamily. FMN serves as cofactor.

The enzyme catalyses 5,6-dihydrouridine(16) in tRNA + NADP(+) = uridine(16) in tRNA + NADPH + H(+). It carries out the reaction 5,6-dihydrouridine(16) in tRNA + NAD(+) = uridine(16) in tRNA + NADH + H(+). Functionally, catalyzes the synthesis of 5,6-dihydrouridine (D), a modified base found in the D-loop of most tRNAs, via the reduction of the C5-C6 double bond in target uridines. Specifically modifies U16 in tRNAs. This is tRNA-dihydrouridine(16) synthase from Vibrio cholerae serotype O1 (strain ATCC 39315 / El Tor Inaba N16961).